The primary structure comprises 388 residues: Probable RNA-binding protein sce3 (388 aa).

The interval 18–84 (ESFGSTNWAD…GGMGSGYQRD (67 aa)) is disordered. Positions 38–50 (DRTTSTYRATPSS) are enriched in polar residues. 3 positions are modified to phosphoserine: S49, S50, and S60. A Phosphothreonine modification is found at T61. Phosphoserine occurs at positions 64, 67, and 71. Residues 94–169 (FTAHVGNLSF…RPVRITVAEP (76 aa)) form the RRM domain. A compositionally biased stretch (basic and acidic residues) spans 171-185 (RSFAREERSTGDWVR). Positions 171-388 (RSFAREERST…WTKIGKGRKH (218 aa)) are disordered. S197 bears the Phosphoserine mark. The segment covering 208-229 (RFRDPARDPSDRVREEPREWVR) has biased composition (basic and acidic residues). Polar residues predominate over residues 248–257 (PRSSSNVNTE). 3 positions are modified to phosphoserine: S250, S251, and S252. A compositionally biased stretch (low complexity) spans 258 to 268 (ATPSATTTTSS). The span at 289–349 (RVEEKLAKRT…LGDGEKKSSE (61 aa)) shows a compositional bias: basic and acidic residues. Position 347 is a phosphoserine (S347).

The protein localises to the cytoplasm. In Schizosaccharomyces pombe (strain 972 / ATCC 24843) (Fission yeast), this protein is Probable RNA-binding protein sce3 (sce3).